A 529-amino-acid chain; its full sequence is MAMGNPGLWTHFSRSPRELRIPNDLELPNGLLVVCGLPGLLLLFFVTAILLYPFRNKSDLPLINPGKGRIGILRGYRARKTFAAELPRLVTEGLSKASAFRIAAPDGVNIVLAPRYAHEIAEHPDLNPGPIAGDEFNCHIDGFEVFAQLGTSDVIAESVRTRLTRQLTKLTPLLTTETPLLLQSQWKDAPTWVEVSPHETALFILSRLSSLVFVGDDLGRNPDWVHILTSYNTEAFAAAQELNLWPQILRPLVARLKPSCRQLRRYIRDARALLVPVIEQRRHAQSHGDRREYNDAIEWLDQTSRSAGQPYDPLLSQMLLAIGSFHTSSDLLGQVLLDLCSRRDWEVLARELRKEIISSLQGAGWDKIALNNLKLMDSVLKESQRLKPASTVTMGRYASREIRLSDGTAIPKGSTVFIANVAMRDPKIYPEPDAFIPDRFTTRREKGDSSAYLVSASPEHIGFGLGRHACPGRFFAANEVKIVLSHMLLKYDIKFPDNGAAAPSTSGIFLETNPDARICVRRRKEEIVI.

The helical transmembrane segment at 31–51 (LLVVCGLPGLLLLFFVTAILL) threads the bilayer. Cys-470 serves as a coordination point for heme.

The protein belongs to the cytochrome P450 family. The cofactor is heme.

The protein resides in the membrane. The protein operates within secondary metabolite biosynthesis; terpenoid biosynthesis. Cytochrome P450 monooxygenase; part of the gene cluster that mediates the biosynthesis of calidodehydroaustin, a fungal meroterpenoid. The first step of the pathway is the synthesis of 3,5-dimethylorsellinic acid by the polyketide synthase ausA. 3,5-dimethylorsellinic acid is then prenylated by the polyprenyl transferase ausN. Further epoxidation by the FAD-dependent monooxygenase ausM and cyclization by the probable terpene cyclase ausL lead to the formation of protoaustinoid A. Protoaustinoid A is then oxidized to spiro-lactone preaustinoid A3 by the combined action of the FAD-binding monooxygenases ausB and ausC, and the dioxygenase ausE. Acid-catalyzed keto-rearrangement and ring contraction of the tetraketide portion of preaustinoid A3 by ausJ lead to the formation of preaustinoid A4. The aldo-keto reductase ausK, with the help of ausH, is involved in the next step by transforming preaustinoid A4 into isoaustinone which is in turn hydroxylated by the P450 monooxygenase ausI to form austinolide. The cytochrome P450 monooxygenase ausG modifies austinolide to austinol. Austinol is further acetylated to austin by the O-acetyltransferase ausP, which spontaneously changes to dehydroaustin. The cytochrome P450 monooxygenase ausR then converts dehydroaustin is into 7-dehydrodehydroaustin. The hydroxylation catalyzed by ausR permits the O-acetyltransferase ausQ to add an additional acetyl group to the molecule, leading to the formation of acetoxydehydroaustin. The short chain dehydrogenase ausT catalyzes the reduction of the double bond present between carbon atoms 1 and 2 to convert 7-dehydrodehydroaustin into 1,2-dihydro-7-hydroxydehydroaustin. AusQ catalyzes not only an acetylation reaction but also the addition of the PKS ausV diketide product to 1,2-dihydro-7-hydroxydehydroaustin, forming precalidodehydroaustin. Finally, the iron/alpha-ketoglutarate-dependent dioxygenase converts precalidodehydroaustin into calidodehydroaustin. The polypeptide is Cytochrome P450 monooxygenase ausG (Aspergillus calidoustus).